We begin with the raw amino-acid sequence, 395 residues long: Ribosomal RNA large subunit methyltransferase G (395 aa).

This sequence belongs to the methyltransferase superfamily. RlmG family.

It localises to the cytoplasm. The enzyme catalyses guanosine(1835) in 23S rRNA + S-adenosyl-L-methionine = N(2)-methylguanosine(1835) in 23S rRNA + S-adenosyl-L-homocysteine + H(+). In terms of biological role, specifically methylates the guanine in position 1835 (m2G1835) of 23S rRNA. This is Ribosomal RNA large subunit methyltransferase G from Yersinia pestis (strain Pestoides F).